Consider the following 360-residue polypeptide: Phospho-N-acetylmuramoyl-pentapeptide-transferase (360 aa).

10 consecutive transmembrane segments (helical) span residues 25–45, 73–93, 94–114, 134–154, 173–193, 198–218, 240–260, 262–282, 287–307, and 337–357; these read RTIYASLTALVISFVLGPWLI, TMGGVLIMSAVMFSTLLWADL, TNAYVWIALGVTFGFGLIGFV, FCLQVVVAGIAGTVLVYGLNG, PGYVLFAILVMVGASNAVNLT, GLAIVPVAIAAGTYMIFAYVA, VFCGALVGAGLGFLWYNAYPA, IFMGDVGSLPLGGALGVVAIL, LALVIVGGLFVMEAVSVILQV, and KVIVRFWIIAIMLALLSVSTL.

Belongs to the glycosyltransferase 4 family. MraY subfamily. Requires Mg(2+) as cofactor.

Its subcellular location is the cell inner membrane. The enzyme catalyses UDP-N-acetyl-alpha-D-muramoyl-L-alanyl-gamma-D-glutamyl-meso-2,6-diaminopimeloyl-D-alanyl-D-alanine + di-trans,octa-cis-undecaprenyl phosphate = di-trans,octa-cis-undecaprenyl diphospho-N-acetyl-alpha-D-muramoyl-L-alanyl-D-glutamyl-meso-2,6-diaminopimeloyl-D-alanyl-D-alanine + UMP. It participates in cell wall biogenesis; peptidoglycan biosynthesis. Catalyzes the initial step of the lipid cycle reactions in the biosynthesis of the cell wall peptidoglycan: transfers peptidoglycan precursor phospho-MurNAc-pentapeptide from UDP-MurNAc-pentapeptide onto the lipid carrier undecaprenyl phosphate, yielding undecaprenyl-pyrophosphoryl-MurNAc-pentapeptide, known as lipid I. The sequence is that of Phospho-N-acetylmuramoyl-pentapeptide-transferase from Desulfatibacillum aliphaticivorans.